Here is a 469-residue protein sequence, read N- to C-terminus: Aryl-phospho-beta-D-glucosidase BglH (469 aa).

The active-site Proton donor is the glutamate 175. Residue glutamate 368 is the Nucleophile of the active site.

The protein belongs to the glycosyl hydrolase 1 family.

It catalyses the reaction 6-phospho-beta-D-glucosyl-(1-&gt;4)-D-glucose + H2O = D-glucose 6-phosphate + D-glucose. Its function is as follows. Catalyzes the hydrolysis of aryl-phospho-beta-D-glucosides such as 4-methylumbelliferyl-phospho-beta-D-glucopyranoside (MUG-P), phosphoarbutin and phosphosalicin. Plays a major role in the utilization of arbutin or salicin as the sole carbon source. BglA and BglH are the major proteins contributing to hydrolysis of MUG-P by extracts of late-exponential-phase or stationary-phase B.subtilis cells. The protein is Aryl-phospho-beta-D-glucosidase BglH (bglH) of Bacillus subtilis (strain 168).